We begin with the raw amino-acid sequence, 566 residues long: Proline--tRNA ligase (566 aa).

The protein belongs to the class-II aminoacyl-tRNA synthetase family. ProS type 1 subfamily. Homodimer.

The protein localises to the cytoplasm. It catalyses the reaction tRNA(Pro) + L-proline + ATP = L-prolyl-tRNA(Pro) + AMP + diphosphate. In terms of biological role, catalyzes the attachment of proline to tRNA(Pro) in a two-step reaction: proline is first activated by ATP to form Pro-AMP and then transferred to the acceptor end of tRNA(Pro). As ProRS can inadvertently accommodate and process non-cognate amino acids such as alanine and cysteine, to avoid such errors it has two additional distinct editing activities against alanine. One activity is designated as 'pretransfer' editing and involves the tRNA(Pro)-independent hydrolysis of activated Ala-AMP. The other activity is designated 'posttransfer' editing and involves deacylation of mischarged Ala-tRNA(Pro). The misacylated Cys-tRNA(Pro) is not edited by ProRS. The chain is Proline--tRNA ligase from Bacillus mycoides (strain KBAB4) (Bacillus weihenstephanensis).